We begin with the raw amino-acid sequence, 175 residues long: Large ribosomal subunit protein uL6 (175 aa).

The protein belongs to the universal ribosomal protein uL6 family. As to quaternary structure, part of the 50S ribosomal subunit.

In terms of biological role, this protein binds to the 23S rRNA, and is important in its secondary structure. It is located near the subunit interface in the base of the L7/L12 stalk, and near the tRNA binding site of the peptidyltransferase center. The chain is Large ribosomal subunit protein uL6 from Xylella fastidiosa (strain M23).